We begin with the raw amino-acid sequence, 170 residues long: uncharacterized protein (170 aa).

The next 3 membrane-spanning stretches (helical) occupy residues 6 to 26, 31 to 51, and 91 to 111; these read PFYF…ILLI, LLFI…LIYI, and IYFS…IVAF.

The protein to M.jannaschii MJ1249.1, MJ0210.1 and MJ0785.1.

The protein localises to the cell membrane. This is an uncharacterized protein from Methanocaldococcus jannaschii (strain ATCC 43067 / DSM 2661 / JAL-1 / JCM 10045 / NBRC 100440) (Methanococcus jannaschii).